Consider the following 443-residue polypeptide: Transcriptional regulatory protein ZraR (443 aa).

Residues aspartate 7–leucine 121 enclose the Response regulatory domain. Aspartate 56 is subject to 4-aspartylphosphate. The Sigma-54 factor interaction domain maps to methionine 141–valine 370. Glycine 172, threonine 173, arginine 329, and arginine 359 together coordinate ATP. The segment at residues lysine 423–serine 442 is a DNA-binding region (H-T-H motif).

Post-translationally, phosphorylated by ZraS.

The protein localises to the cytoplasm. With respect to regulation, activity of the ZraS/ZraR two-component system is repressed by the zinc-bound form of ZraP, which probably interacts with the periplasmic region of ZraS. Functionally, part of the Zra signaling pathway, an envelope stress response (ESR) system composed of the periplasmic accessory protein ZraP, the histidine kinase ZraS and the transcriptional regulator ZraR. The ZraPSR system contributes to antibiotic resistance and is important for membrane integrity in the presence of membrane-targeting biocides. ZraR is a member of the two-component regulatory system ZraS/ZraR. When activated by ZraS, acts in conjunction with sigma-54 to regulate the expression of zraP in the presence of high Zn(2+) or Pb(2+) concentrations. Also positively autoregulates the expression of the zraSR operon. The sequence is that of Transcriptional regulatory protein ZraR (zraR) from Klebsiella oxytoca.